We begin with the raw amino-acid sequence, 424 residues long: Hydrolase ORFZ (424 aa).

Catalysis depends on serine 243, which acts as the Nucleophile.

The protein belongs to the AB hydrolase superfamily. FUS2 hydrolase family. As to quaternary structure, homodimer.

Its pathway is secondary metabolite biosynthesis. Its function is as follows. Hydrolyase; part of the gene cluster that mediates the biosynthesis of a tyrosine-derived cytochalasan acting as a fungal signal recognized by resistant rice plants and leads to avirulence in Pi33 resistant rice cultivars. The first step in the pathway is catalyzed by the hybrid PKS-NRPS ACE1, assisted by the enoyl reductase RAP1, that are responsible for fusion of the tyrosine precursor and the polyketide backbone. The polyketide synthase module (PKS) of ACE1 is responsible for the synthesis of the polyketide backbone and the downstream nonribosomal peptide synthetase (NRPS) amidates the carboxyl end of the polyketide with the tyrosine precursor. Because ACE1 lacks a designated enoylreductase (ER) domain, the required activity is provided the enoyl reductase RAP1. Reduction by the hydrolyase ORFZ, followed by dehydration and intra-molecular Diels-Alder cyclization by the Diels-Alderase ORF3 then yield the required isoindolone-fused macrocycle. A number of oxidative steps catalyzed by the tailoring enzymes identified within the cluster, including cytochrome P450 monooxygenases CYP1 to CYP4, the FAD-linked oxidoreductase OXR2 and the short-chain dehydrogenase/reductase OXR1, are further required to afford the final cytochalasans that confer avirulence and which have still to be identified. The monooxygenase CYP1 has been shown to be a site-selective C-18 hydroxylase whereas the function of CYP3 is the site-selective epoxidation of the C-6/C-7 olefin that is present in some intermediate compounds. Finally, SYN2 and RAP2 are not required for avirulence in Pi33 resistant rice cultivars. This chain is Hydrolase ORFZ, found in Pyricularia oryzae (strain 70-15 / ATCC MYA-4617 / FGSC 8958) (Rice blast fungus).